A 31-amino-acid polypeptide reads, in one-letter code: Photosystem I reaction center subunit XII (31 aa).

The chain crosses the membrane as a helical span at residues 7–26 (QVYVALVIALLPAVLAFRLS).

The protein belongs to the PsaM family.

The protein localises to the cellular thylakoid membrane. This is Photosystem I reaction center subunit XII from Thermosynechococcus vestitus (strain NIES-2133 / IAM M-273 / BP-1).